A 240-amino-acid chain; its full sequence is Ribonuclease T2 (240 aa).

The first 19 residues, 1-19 (MRFIAFAVIFSAVYLCSSA), serve as a signal peptide directing secretion. Cysteine 41 and cysteine 46 are oxidised to a cystine. Residue histidine 56 is part of the active site. Cystine bridges form between cysteine 66–cysteine 110, cysteine 173–cysteine 227, and cysteine 191–cysteine 201. N-linked (GlcNAc...) asparagine glycans are attached at residues asparagine 67 and asparagine 73. Residues glutamate 103 and histidine 107 contribute to the active site.

Belongs to the RNase T2 family. As to expression, ubiquitous.

Its subcellular location is the lysosome lumen. It localises to the endoplasmic reticulum lumen. The protein resides in the secreted. The catalysed reaction is a ribonucleotidyl-ribonucleotide-RNA + H2O = a 3'-end 3'-phospho-ribonucleotide-RNA + a 5'-end dephospho-ribonucleoside-RNA + H(+). Has ribonuclease activity, with higher activity at acidic pH. Probably is involved in lysosomal degradation of ribosomal RNA. The protein is Ribonuclease T2 (rnaset2) of Danio rerio (Zebrafish).